We begin with the raw amino-acid sequence, 1571 residues long: Paternally-expressed gene 3 protein (1571 aa).

Disordered stretches follow at residues 1–120 and 137–241; these read MYHH…NPIQ and AEDD…QERG. Basic and acidic residues-rich tracts occupy residues 35–56, 80–99, 169–186, 193–215, and 223–241; these read GSERDLERRGRSRDVEPRDRWP, FGLDRDDDRRSMDYESRSQD, PEAKKPSHRRGICEDESS, KFIKDVARNPKSGRARELNERPP, and DNWKDSSSSRRESVIQERG. The tract at residues 199 to 265 is 10 X 5 AA repeat of P-H-X-X-E; it reads ARNPKSGRAR…DLASRSRALE (67 aa). The segment at 199-265 is 3 X 5 AA repeat of P-H-D-D-K; the sequence is ARNPKSGRAR…DLASRSRALE (67 aa). C2H2-type zinc fingers lie at residues 325 to 347, 378 to 400, 436 to 458, and 520 to 542; these read YVCDECGRQFSVISEFVEHQIMH, FECKECGETFSRSAALAEHRQIH, YECKVCKETFLHSSALIEHQKIH, and YECKVCGESFLHLSSLREHQKIH. The disordered stretch occupies residues 456-495; that stretch reads KIHGRGNSDDRDNERERERDRLRARAREQRERERERERER. 3 disordered regions span residues 585–649, 672–713, and 764–820; these read ALMG…LKFP, EAQK…TYEG, and REDA…AKKK. Residues 592-614 show a composition bias toward basic and acidic residues; the sequence is SSEHQKNRSRRNFFEGRGFEKPF. 2 stretches are compositionally biased toward polar residues: residues 770–781 and 799–808; these read GSSSSNYHTPNV and DVTFSVPSSS. Over residues 809 to 820 the composition is skewed to basic and acidic residues; it reads VREHQKARAKKK. Residues 850-872 form a C2H2-type 5 zinc finger; it reads FECQECGEAFARRSELIEHQKIH. Residues 937-1070 are disordered; it reads FNAEEPHDKE…ESHGQEKVED (134 aa). Residues 940–1070 are compositionally biased toward basic and acidic residues; sequence EEPHDKETHG…ESHGQEKVED (131 aa). 13 consecutive repeat copies span residues 942–946, 967–971, 987–991, 992–996, 997–1001, 1002–1006, 1007–1011, 1012–1016, 1017–1021, 1022–1026, 1027–1031, 1032–1036, and 1047–1051. C2H2-type zinc fingers lie at residues 1091 to 1113, 1147 to 1169, 1209 to 1231, and 1266 to 1289; these read YECQDCGLGFTDLNDLTSHQDTH, YECPKCGESFIHSSLLFEHQRVH, IRCRQCGQGFIHSSALNEHMRQH, and FECTICGECFFTAKQLGDHHTKVH. The C2H2-type 10; degenerate zinc finger occupies 1317–1339; that stretch reads YECKDCGQSFLDDTVIAERMVFH. The segment at 1373–1487 is disordered; the sequence is NAEAAEPEVE…DQEIEVEEPY (115 aa). Acidic residues-rich tracts occupy residues 1377 to 1397, 1405 to 1418, and 1431 to 1485; these read AEPEVEAAEPEVEAAEPEVEA, EGPDGEAAEPDGEA, and DADE…EVEE. 2 consecutive C2H2-type zinc fingers follow at residues 1488-1510 and 1547-1569; these read YNCHECAETFASSSAFGEHLKSH and FKCDVCGQLFNDRLSLARHQNSH.

The protein belongs to the krueppel C2H2-type zinc-finger protein family. As to quaternary structure, homodimer. Interacts with SIAH1A and SIAH2. Interacts with TRAF2. In terms of tissue distribution, brain, glial cells, neurons, skeletal muscle, uterus and placenta. In the placenta it is found in all trophoblast cells.

It localises to the nucleus. The protein localises to the cytoplasm. In terms of biological role, induces apoptosis in cooperation with SIAH1A. Acts as a mediator between p53/TP53 and BAX in a neuronal death pathway that is activated by DNA damage. Acts synergistically with TRAF2 and inhibits TNF induced apoptosis through activation of NF-kappa-B. Plays a role in regulating maternal behavior and offspring growth. The protein is Paternally-expressed gene 3 protein (Peg3) of Mus musculus (Mouse).